Reading from the N-terminus, the 962-residue chain is Glycine dehydrogenase (decarboxylating) (962 aa).

Lysine 709 is subject to N6-(pyridoxal phosphate)lysine.

It belongs to the GcvP family. As to quaternary structure, the glycine cleavage system is composed of four proteins: P, T, L and H. The cofactor is pyridoxal 5'-phosphate.

It catalyses the reaction N(6)-[(R)-lipoyl]-L-lysyl-[glycine-cleavage complex H protein] + glycine + H(+) = N(6)-[(R)-S(8)-aminomethyldihydrolipoyl]-L-lysyl-[glycine-cleavage complex H protein] + CO2. Its function is as follows. The glycine cleavage system catalyzes the degradation of glycine. The P protein binds the alpha-amino group of glycine through its pyridoxal phosphate cofactor; CO(2) is released and the remaining methylamine moiety is then transferred to the lipoamide cofactor of the H protein. This chain is Glycine dehydrogenase (decarboxylating), found in Shewanella frigidimarina (strain NCIMB 400).